Reading from the N-terminus, the 267-residue chain is MKFSVLMSLYIKENPQFLRECFESLVAQTRQADEIVLVFDGVVTPDLEFVVTEFETKLPLKLVKLPQNRGLGKALNEGLLHCDYDWVFRMDTDDICVPDRFEKQVAFIEQHPESIIFGGQIAEFGKNVNDIVAYRNVPTSAQEIIKFTQKRCPFNHMTVAYQKSAVINCGGYEDLQEDYYLWIKLVAQGLYMANLPDILVYARVGNGMVSRRRGVNQAKAEWRLFKLKYRLGIQGLLSGLFTFALRFGSRLLPTSLLKKLYQTFLRK.

The protein belongs to the glycosyltransferase 2 family.

This is an uncharacterized protein from Haemophilus influenzae (strain ATCC 51907 / DSM 11121 / KW20 / Rd).